The primary structure comprises 324 residues: Aspartate carbamoyltransferase catalytic subunit (324 aa).

2 residues coordinate carbamoyl phosphate: R65 and T66. An L-aspartate-binding site is contributed by K93. R115, H145, and Q148 together coordinate carbamoyl phosphate. Positions 178 and 233 each coordinate L-aspartate. G274 and P275 together coordinate carbamoyl phosphate.

The protein belongs to the aspartate/ornithine carbamoyltransferase superfamily. ATCase family. In terms of assembly, heterododecamer (2C3:3R2) of six catalytic PyrB chains organized as two trimers (C3), and six regulatory PyrI chains organized as three dimers (R2).

The catalysed reaction is carbamoyl phosphate + L-aspartate = N-carbamoyl-L-aspartate + phosphate + H(+). The protein operates within pyrimidine metabolism; UMP biosynthesis via de novo pathway; (S)-dihydroorotate from bicarbonate: step 2/3. Its function is as follows. Catalyzes the condensation of carbamoyl phosphate and aspartate to form carbamoyl aspartate and inorganic phosphate, the committed step in the de novo pyrimidine nucleotide biosynthesis pathway. The protein is Aspartate carbamoyltransferase catalytic subunit of Nitrosococcus oceani (strain ATCC 19707 / BCRC 17464 / JCM 30415 / NCIMB 11848 / C-107).